Consider the following 632-residue polypeptide: Phosphomethylpyrimidine synthase (632 aa).

A compositionally biased stretch (polar residues) spans 1–23 (MNIRSNPQQTVPAVTTGPLSSSR). A disordered region spans residues 1–26 (MNIRSNPQQTVPAVTTGPLSSSRKIF). Substrate contacts are provided by residues Asn-221, Met-250, Tyr-279, His-315, 335–337 (SRG), 376–379 (DGLR), and Glu-415. Position 419 (His-419) interacts with Zn(2+). Tyr-442 serves as a coordination point for substrate. His-483 is a binding site for Zn(2+). [4Fe-4S] cluster-binding residues include Cys-563, Cys-566, and Cys-571.

This sequence belongs to the ThiC family. Homodimer. [4Fe-4S] cluster is required as a cofactor.

It catalyses the reaction 5-amino-1-(5-phospho-beta-D-ribosyl)imidazole + S-adenosyl-L-methionine = 4-amino-2-methyl-5-(phosphooxymethyl)pyrimidine + CO + 5'-deoxyadenosine + formate + L-methionine + 3 H(+). It functions in the pathway cofactor biosynthesis; thiamine diphosphate biosynthesis. Catalyzes the synthesis of the hydroxymethylpyrimidine phosphate (HMP-P) moiety of thiamine from aminoimidazole ribotide (AIR) in a radical S-adenosyl-L-methionine (SAM)-dependent reaction. This chain is Phosphomethylpyrimidine synthase, found in Bradyrhizobium diazoefficiens (strain JCM 10833 / BCRC 13528 / IAM 13628 / NBRC 14792 / USDA 110).